The sequence spans 682 residues: Probable xyloglucan glycosyltransferase 6 (682 aa).

Transmembrane regions (helical) follow at residues 109–129 and 173–193; these read LIKG…AAYF and IVLF…CFWI. Aspartate 260 is an active-site residue. Substrate is bound by residues aspartate 319 and aspartate 321. Residue aspartate 413 is part of the active site. A run of 2 helical transmembrane segments spans residues 491–511 and 516–536; these read LILP…TMFF and LPSW…IIPA. Serine 608 carries the phosphoserine modification. A run of 2 helical transmembrane segments spans residues 632–651 and 657–677; these read LYRT…VRSL and IHFY…LDLI.

This sequence belongs to the glycosyltransferase 2 family. Plant cellulose synthase-like C subfamily. Homodimer. In terms of tissue distribution, mainly expressed in flowers and seeds, and, to a lower extent, in seedlings, roots, leaves and stems.

It localises to the golgi apparatus membrane. Functionally, probable beta-1,4-glucan synthase rather involved in the synthesis of the xyloglucan backbone than cellulose. Seems to work simultaneously with xyloglucan 6-xylosyltransferase. Xyloglucan is a noncellulosic polysaccharides of plant cell wall and consists of a glucan backbone substituted by xylose, galactose and fucose. This chain is Probable xyloglucan glycosyltransferase 6, found in Arabidopsis thaliana (Mouse-ear cress).